Reading from the N-terminus, the 865-residue chain is MGKIADTPMMVQYHEIKAQYPDAFVFYRLGDFYELFEEDAIQGAKILELTLTARNKNSENPVPMAGIPHHAAQNYIDILVDQGYKVAIVEQMEDPAVAKGMVKRDVVQLVTPGTKMADGAGGDKQNNYLAAVLPAKNVWSIAYVDLSTGELRATTTGRFEDVMDELSSLEVKEVVLSKNDVATTEQQIASQLGERGIVISAQGTAEPSATVSFLTQALKVTSEIEATTILLNYIFDTQRRSLDHIVPATSYERLKFLKFNQDTRSNLDLVENMRTKKKAGSLLGLIDRTNTAMGGRLLKQWLLKPLRESSDIEARLDLVQSFQNDFLTRGALQDHLKSVYDLERLAARAAMGTMNARELVQLKRSLRAIPGIKSVLLQADTTLSNAGQQLDDMTDLADLIDVAIVDEPPVSVREGNIINDGFDERIDGYRQVLKDNQQWLAQLEIDERAQTGINSLKVGYNKNFGYYIEVTKANIGRLATDRYQRLQTLTNAERFVTPALKQHESLIIEAQAKRTEREYELFVTVREHVKSDISRIQTLAQHIARLDVLSSLADVADNQRFVRPTFTNQHVIHIMQGRHPVVESILDAGDFVANDVILDESINMQLITGPNMAGKSTYMRELALIVILAQMGSFVPADVAELPIFDQIFTRIGANDDMAMGQSTFMVEMAEANDALQQATANSLVLFDELGRGTATYDGMALAQAIIEFLDKHIHAKTLFSTHYHELTVLADNHTSIENVHVGAVEDDEGQLHFLHQIQSGPADKSYGIHVAALAGLPKELIDNATSILHDLEAGKMIVTQTNDQVASAVIQPDAHLSEQVALFDMTVTDDKTQKILDALDNYDILNMTPVDAINALNRLKKMRS.

609-616 provides a ligand contact to ATP; the sequence is GPNMAGKS.

Belongs to the DNA mismatch repair MutS family.

In terms of biological role, this protein is involved in the repair of mismatches in DNA. It is possible that it carries out the mismatch recognition step. This protein has a weak ATPase activity. The sequence is that of DNA mismatch repair protein MutS from Leuconostoc citreum (strain KM20).